Here is a 207-residue protein sequence, read N- to C-terminus: Small ribosomal subunit protein uS4 (207 aa).

The segment at 31 to 51 is disordered; that stretch reads KCKLDSKPGQHGRTSGARTSD. In terms of domain architecture, S4 RNA-binding spans 97-160; the sequence is SRLDNVVYRM…KKQARIRESL (64 aa).

This sequence belongs to the universal ribosomal protein uS4 family. In terms of assembly, part of the 30S ribosomal subunit. Contacts protein S5. The interaction surface between S4 and S5 is involved in control of translational fidelity.

Functionally, one of the primary rRNA binding proteins, it binds directly to 16S rRNA where it nucleates assembly of the body of the 30S subunit. In terms of biological role, with S5 and S12 plays an important role in translational accuracy. The chain is Small ribosomal subunit protein uS4 from Bordetella avium (strain 197N).